The following is a 206-amino-acid chain: LexA repressor (206 aa).

A DNA-binding region (H-T-H motif) is located at residues 29–49; the sequence is VREICEAVGLRSTSTVHGHLA. Active-site for autocatalytic cleavage activity residues include Ser130 and Lys167.

The protein belongs to the peptidase S24 family. Homodimer.

The catalysed reaction is Hydrolysis of Ala-|-Gly bond in repressor LexA.. Represses a number of genes involved in the response to DNA damage (SOS response), including recA and lexA. In the presence of single-stranded DNA, RecA interacts with LexA causing an autocatalytic cleavage which disrupts the DNA-binding part of LexA, leading to derepression of the SOS regulon and eventually DNA repair. The polypeptide is LexA repressor (Alkaliphilus oremlandii (strain OhILAs) (Clostridium oremlandii (strain OhILAs))).